Here is a 185-residue protein sequence, read N- to C-terminus: Acireductone dioxygenase (185 aa).

Residues histidine 96, histidine 98, glutamate 102, and histidine 140 each coordinate Fe(2+). Positions 96, 98, 102, and 140 each coordinate Ni(2+).

This sequence belongs to the acireductone dioxygenase (ARD) family. In terms of assembly, monomer. Fe(2+) is required as a cofactor. Ni(2+) serves as cofactor.

The enzyme catalyses 1,2-dihydroxy-5-(methylsulfanyl)pent-1-en-3-one + O2 = 3-(methylsulfanyl)propanoate + CO + formate + 2 H(+). The catalysed reaction is 1,2-dihydroxy-5-(methylsulfanyl)pent-1-en-3-one + O2 = 4-methylsulfanyl-2-oxobutanoate + formate + 2 H(+). The protein operates within amino-acid biosynthesis; L-methionine biosynthesis via salvage pathway; L-methionine from S-methyl-5-thio-alpha-D-ribose 1-phosphate: step 5/6. Functionally, catalyzes 2 different reactions between oxygen and the acireductone 1,2-dihydroxy-3-keto-5-methylthiopentene (DHK-MTPene) depending upon the metal bound in the active site. Fe-containing acireductone dioxygenase (Fe-ARD) produces formate and 2-keto-4-methylthiobutyrate (KMTB), the alpha-ketoacid precursor of methionine in the methionine recycle pathway. Ni-containing acireductone dioxygenase (Ni-ARD) produces methylthiopropionate, carbon monoxide and formate, and does not lie on the methionine recycle pathway. In Marinobacter nauticus (strain ATCC 700491 / DSM 11845 / VT8) (Marinobacter aquaeolei), this protein is Acireductone dioxygenase.